Reading from the N-terminus, the 315-residue chain is MEKKELSACVPFMGFSGKRLDQILSKLFMQYSRSCLKKWIIMNNVYINGKIENQPDKKILGGEKITIYSTDEKLPINLPQNIALNTIYEDSNILIINKPPGLVVHPGAGNQDGTILNALLYRYTNISSIPRCGIIHRLDKDTSGLMVIAKTIFSYNKLVTLLKKRKIIRKYQGIIKGNMISGGIVNYPIMRHPFKRICMTTDSLGKKSITHYKIINRFKFHTHVSFRLETGRTHQIRVHMLHIGYPLLGDPLYGGIDYGCNYFQENRNIYRKFNLFRQALHADYIEFIHPFTQKVMSWSASLPQDMKDILLYLKK.

One can recognise an S4 RNA-binding domain in the interval 18–87 (KRLDQILSKL…LPQNIALNTI (70 aa)). The active site involves aspartate 139.

The protein belongs to the pseudouridine synthase RluA family.

Its subcellular location is the cytoplasm. It carries out the reaction uridine(1911/1915/1917) in 23S rRNA = pseudouridine(1911/1915/1917) in 23S rRNA. Functionally, responsible for synthesis of pseudouridine from uracil at positions 1911, 1915 and 1917 in 23S ribosomal RNA. In Buchnera aphidicola subsp. Schizaphis graminum (strain Sg), this protein is Ribosomal large subunit pseudouridine synthase D (rluD).